The sequence spans 61 residues: Small ribosomal subunit protein uS14 (61 aa).

Positions 24, 27, 40, and 43 each coordinate Zn(2+).

Belongs to the universal ribosomal protein uS14 family. Zinc-binding uS14 subfamily. In terms of assembly, part of the 30S ribosomal subunit. Contacts proteins S3 and S10. The cofactor is Zn(2+).

Binds 16S rRNA, required for the assembly of 30S particles and may also be responsible for determining the conformation of the 16S rRNA at the A site. The polypeptide is Small ribosomal subunit protein uS14 (Mycoplasma mobile (strain ATCC 43663 / 163K / NCTC 11711) (Mesomycoplasma mobile)).